The sequence spans 317 residues: GTPase Era (317 aa).

An Era-type G domain is found at 17–190; sequence RAGFACFVGR…ADLLTPLLPE (174 aa). The tract at residues 25–32 is G1; the sequence is GRPNAGKS. Position 25 to 32 (25 to 32) interacts with GTP; the sequence is GRPNAGKS. A G2 region spans residues 51-55; sequence QTTRH. Positions 72 to 75 are G3; sequence DTPG. GTP contacts are provided by residues 72-76 and 135-138; these read DTPGL and TKTD. The tract at residues 135-138 is G4; it reads TKTD. Positions 169–171 are G5; sequence VSA. One can recognise a KH type-2 domain in the interval 221–303; it reads VRDELPHSIA…FLDLHVKVAK (83 aa).

It belongs to the TRAFAC class TrmE-Era-EngA-EngB-Septin-like GTPase superfamily. Era GTPase family. As to quaternary structure, monomer.

The protein resides in the cytoplasm. It is found in the cell membrane. Functionally, an essential GTPase that binds both GDP and GTP, with rapid nucleotide exchange. Plays a role in 16S rRNA processing and 30S ribosomal subunit biogenesis and possibly also in cell cycle regulation and energy metabolism. The chain is GTPase Era from Streptomyces coelicolor (strain ATCC BAA-471 / A3(2) / M145).